The sequence spans 498 residues: ATP synthase subunit beta, chloroplastic (498 aa).

172 to 179 contributes to the ATP binding site; the sequence is GGAGVGKT.

Belongs to the ATPase alpha/beta chains family. As to quaternary structure, F-type ATPases have 2 components, CF(1) - the catalytic core - and CF(0) - the membrane proton channel. CF(1) has five subunits: alpha(3), beta(3), gamma(1), delta(1), epsilon(1). CF(0) has four main subunits: a(1), b(1), b'(1) and c(9-12).

It is found in the plastid. The protein localises to the chloroplast thylakoid membrane. It carries out the reaction ATP + H2O + 4 H(+)(in) = ADP + phosphate + 5 H(+)(out). Produces ATP from ADP in the presence of a proton gradient across the membrane. The catalytic sites are hosted primarily by the beta subunits. The polypeptide is ATP synthase subunit beta, chloroplastic (Nandina domestica (Heavenly bamboo)).